A 194-amino-acid polypeptide reads, in one-letter code: Gonadal protein gdl (194 aa).

The protein belongs to the gonadal family. As to expression, in stage 6-14 egg chamber nurse cells and oocytes of adult females and spermatocyte cysts and bundles of maturing sperm of larval, pupal and adult males.

This is Gonadal protein gdl (gdl) from Drosophila melanogaster (Fruit fly).